The primary structure comprises 384 residues: NAD-capped RNA hydrolase NPY1 (384 aa).

The Zn(2+) site is built by Cys179, Cys182, Cys197, and Cys206. A Nudix hydrolase domain is found at 219–351 (PRTDPTVIIA…AGGYRVPFKN (133 aa)). Mg(2+)-binding residues include Ala256, Glu272, Glu276, and Glu322. Substrate contacts are provided by residues 256–258 (AGF), Glu272, Glu276, and Glu322. The Nudix box signature appears at 257 to 278 (GFMEPSETIEEACIREIWEETG). The Microbody targeting signal signature appears at 378–380 (KTS).

This sequence belongs to the Nudix hydrolase family. NudC subfamily. As to quaternary structure, homodimer. It depends on Mg(2+) as a cofactor. Zn(2+) serves as cofactor.

The protein resides in the peroxisome. The enzyme catalyses a 5'-end NAD(+)-phospho-ribonucleoside in mRNA + H2O = a 5'-end phospho-adenosine-phospho-ribonucleoside in mRNA + beta-nicotinamide D-ribonucleotide + 2 H(+). It catalyses the reaction NAD(+) + H2O = beta-nicotinamide D-ribonucleotide + AMP + 2 H(+). It carries out the reaction NADH + H2O = reduced beta-nicotinamide D-ribonucleotide + AMP + 2 H(+). Its function is as follows. mRNA decapping enzyme that specifically removes the nicotinamide adenine dinucleotide (NAD) cap from a subset of mRNAs by hydrolyzing the diphosphate linkage to produce nicotinamide mononucleotide (NMN) and 5' monophosphate mRNA. The NAD-cap is present at the 5'-end of some RNAs; in contrast to the canonical N7 methylguanosine (m7G) cap, the NAD cap promotes mRNA decay. Mediates the hydrolysis of some nucleoside diphosphate derivatives. This is NAD-capped RNA hydrolase NPY1 from Saccharomyces cerevisiae (strain ATCC 204508 / S288c) (Baker's yeast).